The chain runs to 778 residues: Phosphoribosylformylglycinamidine synthase subunit PurL (778 aa).

The active site involves His44. Positions 47 and 86 each coordinate ATP. Glu88 contacts Mg(2+). Substrate is bound by residues 89–92 (SHNH) and Arg111. His90 (proton acceptor) is an active-site residue. Positions 112 and 265 each coordinate Mg(2+). 309–311 (ESQ) lines the substrate pocket. The tract at residues 455–474 (TRQPPGEGLPGRSGQAGPPK) is disordered. Positions 518 and 555 each coordinate ATP. Asn556 contributes to the Mg(2+) binding site. Ser558 contributes to the substrate binding site.

This sequence belongs to the FGAMS family. As to quaternary structure, monomer. Part of the FGAM synthase complex composed of 1 PurL, 1 PurQ and 2 PurS subunits.

It is found in the cytoplasm. It catalyses the reaction N(2)-formyl-N(1)-(5-phospho-beta-D-ribosyl)glycinamide + L-glutamine + ATP + H2O = 2-formamido-N(1)-(5-O-phospho-beta-D-ribosyl)acetamidine + L-glutamate + ADP + phosphate + H(+). It functions in the pathway purine metabolism; IMP biosynthesis via de novo pathway; 5-amino-1-(5-phospho-D-ribosyl)imidazole from N(2)-formyl-N(1)-(5-phospho-D-ribosyl)glycinamide: step 1/2. In terms of biological role, part of the phosphoribosylformylglycinamidine synthase complex involved in the purines biosynthetic pathway. Catalyzes the ATP-dependent conversion of formylglycinamide ribonucleotide (FGAR) and glutamine to yield formylglycinamidine ribonucleotide (FGAM) and glutamate. The FGAM synthase complex is composed of three subunits. PurQ produces an ammonia molecule by converting glutamine to glutamate. PurL transfers the ammonia molecule to FGAR to form FGAM in an ATP-dependent manner. PurS interacts with PurQ and PurL and is thought to assist in the transfer of the ammonia molecule from PurQ to PurL. This chain is Phosphoribosylformylglycinamidine synthase subunit PurL, found in Symbiobacterium thermophilum (strain DSM 24528 / JCM 14929 / IAM 14863 / T).